The sequence spans 110 residues: Large ribosomal subunit protein uL24 (110 aa).

This sequence belongs to the universal ribosomal protein uL24 family. Part of the 50S ribosomal subunit.

One of two assembly initiator proteins, it binds directly to the 5'-end of the 23S rRNA, where it nucleates assembly of the 50S subunit. Functionally, one of the proteins that surrounds the polypeptide exit tunnel on the outside of the subunit. The sequence is that of Large ribosomal subunit protein uL24 from Caldicellulosiruptor saccharolyticus (strain ATCC 43494 / DSM 8903 / Tp8T 6331).